Here is a 127-residue protein sequence, read N- to C-terminus: Phosphoribosyl-AMP cyclohydrolase (127 aa).

D78 serves as a coordination point for Mg(2+). Zn(2+) is bound at residue C79. Residues D80 and D82 each coordinate Mg(2+). 2 residues coordinate Zn(2+): C95 and C102.

It belongs to the PRA-CH family. Homodimer. The cofactor is Mg(2+). It depends on Zn(2+) as a cofactor.

It is found in the cytoplasm. The enzyme catalyses 1-(5-phospho-beta-D-ribosyl)-5'-AMP + H2O = 1-(5-phospho-beta-D-ribosyl)-5-[(5-phospho-beta-D-ribosylamino)methylideneamino]imidazole-4-carboxamide. The protein operates within amino-acid biosynthesis; L-histidine biosynthesis; L-histidine from 5-phospho-alpha-D-ribose 1-diphosphate: step 3/9. Its function is as follows. Catalyzes the hydrolysis of the adenine ring of phosphoribosyl-AMP. The chain is Phosphoribosyl-AMP cyclohydrolase from Salinibacter ruber (strain DSM 13855 / M31).